A 180-amino-acid polypeptide reads, in one-letter code: UPF0340 protein LACR_0494 (180 aa).

Belongs to the UPF0340 family.

This chain is UPF0340 protein LACR_0494, found in Lactococcus lactis subsp. cremoris (strain SK11).